Here is a 142-residue protein sequence, read N- to C-terminus: UPF0102 protein Bcen2424_0290 (142 aa).

The segment covering 1-19 (MCHAAPARPEGARGRPPSG) has biased composition (low complexity). The interval 1 to 27 (MCHAAPARPEGARGRPPSGDNFSGAAR) is disordered.

The protein belongs to the UPF0102 family.

The polypeptide is UPF0102 protein Bcen2424_0290 (Burkholderia cenocepacia (strain HI2424)).